The sequence spans 330 residues: Holliday junction branch migration complex subunit RuvB (330 aa).

The large ATPase domain (RuvB-L) stretch occupies residues 1-181 (MEDRLVGCRL…FGVINKLELY (181 aa)). Residues leucine 20, arginine 21, glycine 62, lysine 65, threonine 66, threonine 67, 128–130 (EDY), arginine 171, tyrosine 181, and arginine 218 contribute to the ATP site. Threonine 66 lines the Mg(2+) pocket. Positions 182 to 252 (SVEELGQIVK…IARTGLEALE (71 aa)) are small ATPAse domain (RuvB-S). Residues 255-330 (EIGLDAVDRN…AYEHFGLKYE (76 aa)) are head domain (RuvB-H). DNA contacts are provided by lysine 310 and arginine 315.

The protein belongs to the RuvB family. In terms of assembly, homohexamer. Forms an RuvA(8)-RuvB(12)-Holliday junction (HJ) complex. HJ DNA is sandwiched between 2 RuvA tetramers; dsDNA enters through RuvA and exits via RuvB. An RuvB hexamer assembles on each DNA strand where it exits the tetramer. Each RuvB hexamer is contacted by two RuvA subunits (via domain III) on 2 adjacent RuvB subunits; this complex drives branch migration. In the full resolvosome a probable DNA-RuvA(4)-RuvB(12)-RuvC(2) complex forms which resolves the HJ.

Its subcellular location is the cytoplasm. The enzyme catalyses ATP + H2O = ADP + phosphate + H(+). Functionally, the RuvA-RuvB-RuvC complex processes Holliday junction (HJ) DNA during genetic recombination and DNA repair, while the RuvA-RuvB complex plays an important role in the rescue of blocked DNA replication forks via replication fork reversal (RFR). RuvA specifically binds to HJ cruciform DNA, conferring on it an open structure. The RuvB hexamer acts as an ATP-dependent pump, pulling dsDNA into and through the RuvAB complex. RuvB forms 2 homohexamers on either side of HJ DNA bound by 1 or 2 RuvA tetramers; 4 subunits per hexamer contact DNA at a time. Coordinated motions by a converter formed by DNA-disengaged RuvB subunits stimulates ATP hydrolysis and nucleotide exchange. Immobilization of the converter enables RuvB to convert the ATP-contained energy into a lever motion, pulling 2 nucleotides of DNA out of the RuvA tetramer per ATP hydrolyzed, thus driving DNA branch migration. The RuvB motors rotate together with the DNA substrate, which together with the progressing nucleotide cycle form the mechanistic basis for DNA recombination by continuous HJ branch migration. Branch migration allows RuvC to scan DNA until it finds its consensus sequence, where it cleaves and resolves cruciform DNA. The sequence is that of Holliday junction branch migration complex subunit RuvB from Acetivibrio thermocellus (strain ATCC 27405 / DSM 1237 / JCM 9322 / NBRC 103400 / NCIMB 10682 / NRRL B-4536 / VPI 7372) (Clostridium thermocellum).